A 268-amino-acid polypeptide reads, in one-letter code: Esterase GME11355 (268 aa).

Catalysis depends on charge relay system residues Ser122, Asp212, and His240.

The protein belongs to the LovG family.

The protein operates within secondary metabolite biosynthesis. Its function is as follows. Esterase; part of the gene cluster that mediates the biosynthesis of dibenzodioxocinones such as pestalotiollide B, a novel class of inhibitors against cholesterol ester transfer protein (CEPT). The biosynthesis initiates from condensation of acetate and malonate units catalyzed by the non-reducing PKS pks8/GME11356. Pks8/GME11356 lacks a thioesterase (TE) domain, which is important to the cyclizing of the third ring of atrochrysone carboxylic acid, and the esterase GME11355 might play the role of TE and catalyzes the cyclization reaction of the C ring. The lactamase-like protein GME11357 (or other beta-lactamases in Pestalotiopsis microspora) probably hydrolyzes the thioester bond between the ACP of pks8/GME11356 and the intermediate to release atrochrysone carboxylic acid, which is spontaneously dehydrates to form endocrocin anthrone. Endocrocin anthrone is further converted to emodin via the endocrocin intermediate. Emodin is then oxidized by several enzymes such as the Baeyer-Villiger oxidase GME11358, the oxidoreductase GME11367, the short chain dehydrogenase/reductase GME11373, as well as by other oxidoreductases from the cluster, to modify the A and C rings and open the B ring, and finally yield monodictyphenone. The prenyltransferase GME11375 may catalyze the addition reaction between the C5 side chains and the carbon bone of dibenzodioxocinones. The remaining biochemical reactions to the final product dibenzodioxocinones should be methylation catalyzed by methyltransferase GME11366 and reduction and lactonization reaction catalyzed by a series of oxidordeuctases. This is Esterase GME11355 from Pestalotiopsis microspora.